A 203-amino-acid chain; its full sequence is Phosphatidylethanolamine N-methyltransferase (203 aa).

The catalysed reaction is a 1,2-diacyl-sn-glycero-3-phosphoethanolamine + S-adenosyl-L-methionine = a 1,2-diacyl-sn-glycero-3-phospho-N-methylethanolamine + S-adenosyl-L-homocysteine + H(+). It functions in the pathway phospholipid metabolism; phosphatidylcholine biosynthesis. This enzyme catalyzes three distinct methylation reactions for converting phosphatidylethanolamine to phosphatidylcholine. The protein is Phosphatidylethanolamine N-methyltransferase (pmtA) of Cereibacter sphaeroides (Rhodobacter sphaeroides).